The primary structure comprises 220 residues: Ras-related protein Rab-3A (220 aa).

GTP is bound by residues Ser-31, Ser-32, Val-33, Gly-34, Lys-35, Thr-36, Ser-37, Thr-48, Pro-49, Ser-53, and Thr-54. A Mg(2+)-binding site is contributed by Thr-36. The Switch 1 motif lies at 49–58 (PAFVSTVGID). Positions 54 and 77 each coordinate Mg(2+). Residue Gly-80 coordinates GTP. The Switch 2 motif lies at 80–96 (GQERYRTITTAYYRGAM). Thr-86 bears the Phosphothreonine mark. GTP-binding residues include Asn-135, Lys-136, Asp-138, Ala-166, and Lys-167. A phosphoserine mark is found at Ser-188 and Ser-190. A disordered region spans residues 194 to 220 (ADPAVTGAKQGPQLTDQQAPPHQDCAC). 2 S-geranylgeranyl cysteine lipidation sites follow: Cys-218 and Cys-220. Residue Cys-220 is modified to Cysteine methyl ester.

The protein belongs to the small GTPase superfamily. Rab family. As to quaternary structure, interacts with RIMS1 and RIMS2. Interacts with Rabphilin-3A/RPH3A and Rab effector Noc2/RPH3AL. Interacts with SYTL4. Interacts with RAB3IP. Interacts with SGSM1 and SGSM3. Interacts with SYT1. Interacts with MYH9; this interaction is essential for lysosome exocytosis and plasma membrane repair. Interacts with STXBP1; this interaction promotes RAB3A dissociation from the vesicle membrane. Interacts with SNCA. Interacts with GDI1, GDI2, CHM and CHML; phosphorylation at Thr-86 disrupts these interactions. Interacts with MADD (via uDENN domain); the GTP-bound form is preferred for interaction. Requires Mg(2+) as cofactor. Phosphorylation of Thr-86 in the switch II region by LRRK2 prevents the association of RAB regulatory proteins, including CHM, CHML and RAB GDP dissociation inhibitors GDI1 and GDI2.

It localises to the cytoplasm. The protein localises to the cytosol. Its subcellular location is the lysosome. The protein resides in the cytoplasmic vesicle. It is found in the secretory vesicle. It localises to the cell projection. The protein localises to the axon. Its subcellular location is the cell membrane. The protein resides in the presynapse. It is found in the postsynapse. It carries out the reaction GTP + H2O = GDP + phosphate + H(+). With respect to regulation, regulated by guanine nucleotide exchange factors (GEFs) including RAB3IL1 and MADD which promote the exchange of bound GDP for free GTP. Regulated by GTPase activating proteins (GAPs) including RAB3GAP1 and TBC1D10B which increase the GTP hydrolysis activity. Inhibited by GDP dissociation inhibitors (GDIs) which prevent Rab-GDP dissociation. In terms of biological role, the small GTPases Rab are key regulators of intracellular membrane trafficking, from the formation of transport vesicles to their fusion with membranes. Rabs cycle between an inactive GDP-bound form and an active GTP-bound form that is able to recruit to membranes different sets of downstream effectors directly responsible for vesicle formation, movement, tethering and fusion. RAB3A plays a central role in regulated exocytosis and secretion. Controls the recruitment, tethering and docking of secretory vesicles to the plasma membrane. Upon stimulation, switches to its active GTP-bound form, cycles to vesicles and recruits effectors such as RIMS1, RIMS2, Rabphilin-3A/RPH3A, RPH3AL or SYTL4 to help the docking of vesicules onto the plasma membrane. Upon GTP hydrolysis by GTPase-activating protein, dissociates from the vesicle membrane allowing the exocytosis to proceed. Stimulates insulin secretion through interaction with RIMS2 or RPH3AL effectors in pancreatic beta cells. Regulates calcium-dependent lysosome exocytosis and plasma membrane repair (PMR) via the interaction with 2 effectors, SYTL4 and myosin-9/MYH9. Acts as a positive regulator of acrosome content secretion in sperm cells by interacting with RIMS1. Also plays a role in the regulation of dopamine release by interacting with synaptotagmin I/SYT. This Sus scrofa (Pig) protein is Ras-related protein Rab-3A (RAB3A).